Here is a 170-residue protein sequence, read N- to C-terminus: Small ribosomal subunit protein uS5 (170 aa).

In terms of domain architecture, S5 DRBM spans 13-76; sequence LTEKLIGVNR…DQARRSMVKI (64 aa).

The protein belongs to the universal ribosomal protein uS5 family. Part of the 30S ribosomal subunit. Contacts proteins S4 and S8.

In terms of biological role, with S4 and S12 plays an important role in translational accuracy. Located at the back of the 30S subunit body where it stabilizes the conformation of the head with respect to the body. The chain is Small ribosomal subunit protein uS5 from Laribacter hongkongensis (strain HLHK9).